Consider the following 62-residue polypeptide: U8-theraphotoxin-Cg1a 2 (62 aa).

Positions 1-21 are cleaved as a signal peptide; the sequence is MKTLVLFIIFGLAALFLLSSA. The propeptide occupies 22–29; that stretch reads TELEETER. 3 cysteine pairs are disulfide-bonded: Cys-31/Cys-46, Cys-38/Cys-51, and Cys-45/Cys-58.

The protein belongs to the neurotoxin 10 (Hwtx-1) family. 30 (Jztx-14) subfamily. Expressed by the venom gland.

It is found in the secreted. Its function is as follows. Probable ion channel inhibitor. The protein is U8-theraphotoxin-Cg1a 2 of Chilobrachys guangxiensis (Chinese earth tiger tarantula).